We begin with the raw amino-acid sequence, 286 residues long: Bifunctional protein FolD 2 (286 aa).

NADP(+) contacts are provided by residues 165-167 (GRG), Thr192, and Ile233.

It belongs to the tetrahydrofolate dehydrogenase/cyclohydrolase family. As to quaternary structure, homodimer.

The catalysed reaction is (6R)-5,10-methylene-5,6,7,8-tetrahydrofolate + NADP(+) = (6R)-5,10-methenyltetrahydrofolate + NADPH. The enzyme catalyses (6R)-5,10-methenyltetrahydrofolate + H2O = (6R)-10-formyltetrahydrofolate + H(+). It participates in one-carbon metabolism; tetrahydrofolate interconversion. Catalyzes the oxidation of 5,10-methylenetetrahydrofolate to 5,10-methenyltetrahydrofolate and then the hydrolysis of 5,10-methenyltetrahydrofolate to 10-formyltetrahydrofolate. This chain is Bifunctional protein FolD 2, found in Salinispora arenicola (strain CNS-205).